We begin with the raw amino-acid sequence, 398 residues long: MRKRTEPVTLEHERCAASGSSSSGSAAAALDADCSLKQNLRLAGKGTAEPHSASDAGMKRALGRRKSLWFRLRKILLCVLGFYIAIPFLVKLCPGIQAKLIFLNFVRVPYFIDLKKPQDQGLNHTCNYYLQPEDDVTIGVWHTIPSVWWKNAQGKDQMWYEDALASNHAIILYLHGNAGTRGGDHRVELYKVLSSLGYHVVTFDYRGWGDSVGTPSERGMTYDALHVFDWIKARSGDNPVYIWGHSLGTGVATNLVRRLCERETPPDALILESPFTNIREEAKSHPFSVIYRYFPGFDWFFLDPITSSGIKFANDENMKHISCPLLILHAEDDPVVPFHLGRKLYNIAAPSRSFRDFKVQFIPFHSDLGYRHKYIYKSPELPRILREFLGKSEPERQH.

Basic and acidic residues predominate over residues 1 to 15 (MRKRTEPVTLEHERC). A disordered region spans residues 1-24 (MRKRTEPVTLEHERCAASGSSSSG). Residues 1–74 (MRKRTEPVTL…RKSLWFRLRK (74 aa)) are Cytoplasmic-facing. Residues 75-95 (ILLCVLGFYIAIPFLVKLCPG) form a helical membrane-spanning segment. Residues 96 to 398 (IQAKLIFLNF…LGKSEPERQH (303 aa)) are Extracellular-facing. Asn123 is a glycosylation site (N-linked (GlcNAc...) asparagine). Ser246 serves as the catalytic Nucleophile. Residues Asp333 and His372 each act as charge relay system in the active site.

Belongs to the serine esterase family. Glycosylated.

It localises to the endoplasmic reticulum membrane. The protein resides in the mitochondrion. It carries out the reaction 1-(9Z-octadecenoyl)-sn-glycero-3-phospho-L-serine + H2O = sn-glycero-3-phospho-L-serine + (9Z)-octadecenoate + H(+). The catalysed reaction is 1-(9Z-octadecenoyl)-sn-glycero-3-phospho-(1'-sn-glycerol) + H2O = sn-glycero-3-phospho-(1'-sn-glycerol) + (9Z)-octadecenoate + H(+). The enzyme catalyses 1-(9Z-octadecenoyl)-sn-glycero-3-phospho-(1D-myo-inositol) + H2O = sn-glycero-3-phospho-1D-myo-inositol + (9Z)-octadecenoate + H(+). It catalyses the reaction 1-(9Z-octadecenoyl)-sn-glycero-3-phosphoethanolamine + H2O = sn-glycero-3-phosphoethanolamine + (9Z)-octadecenoate + H(+). It carries out the reaction 1-(9Z-octadecenoyl)-sn-glycero-3-phosphocholine + H2O = 1-(9Z-octadecenoyl)-sn-glycerol + phosphocholine + H(+). The catalysed reaction is 2-(9Z-octadecenoyl)-glycerol + H2O = glycerol + (9Z)-octadecenoate + H(+). The enzyme catalyses 1-hexadecanoyl-sn-glycero-3-phospho-L-serine + H2O = sn-glycero-3-phospho-L-serine + hexadecanoate + H(+). It catalyses the reaction 2-(5Z,8Z,11Z,14Z-eicosatetraenoyl)-glycerol + H2O = glycerol + (5Z,8Z,11Z,14Z)-eicosatetraenoate + H(+). It carries out the reaction Hydrolyzes glycerol monoesters of long-chain fatty acids.. The catalysed reaction is 1-decanoylglycerol + H2O = decanoate + glycerol + H(+). The enzyme catalyses 1-dodecanoylglycerol + H2O = dodecanoate + glycerol + H(+). It catalyses the reaction 1-tetradecanoylglycerol + H2O = tetradecanoate + glycerol + H(+). It carries out the reaction 2-hexadecanoylglycerol + H2O = glycerol + hexadecanoate + H(+). The catalysed reaction is 1-(9Z-octadecenoyl)-glycerol + H2O = glycerol + (9Z)-octadecenoate + H(+). The enzyme catalyses 2-(9Z,12Z-octadecadienoyl)-glycerol + H2O = (9Z,12Z)-octadecadienoate + glycerol + H(+). It catalyses the reaction 1-(5Z,8Z,11Z,14Z-eicosatetraenoyl)-glycerol + H2O = glycerol + (5Z,8Z,11Z,14Z)-eicosatetraenoate + H(+). It carries out the reaction 1-(9Z,12Z-octadecadienoyl)-glycerol + H2O = (9Z,12Z)-octadecadienoate + glycerol + H(+). The catalysed reaction is 1-hexadecanoylglycerol + H2O = glycerol + hexadecanoate + H(+). The enzyme catalyses 1-octadecanoylglycerol + H2O = octadecanoate + glycerol + H(+). It catalyses the reaction 1-octadecanoyl-2-(9,10-epoxyoctadecanoyl)-sn-glycero-3-phospho-L-serine + H2O = 9,10-epoxyoctadecanoate + 1-octadecanoyl-sn-glycero-3-phosphoserine + H(+). It carries out the reaction 1-octadecanoyl-2-(10-hydroxyoctadecanoyl)-sn-glycero-3-phospho-L-serine + H2O = 1-octadecanoyl-sn-glycero-3-phosphoserine + 10-hydroxyoctadecanoate + H(+). The catalysed reaction is 1-hexadecanoyl-2-(10-hydroxyoctadecanoyl)-sn-glycero-3-phospho-L-serine + H2O = 10-hydroxyoctadecanoate + 1-hexadecanoyl-sn-glycero-3-phospho-L-serine + H(+). With respect to regulation, selectively inhibited by DO264 (N-3-pyridyl-N'-(1-[3-chloro-4-{2-chloro-4-(trifluoromethoxy)phenoxy}pyridine-2-yl]piperidin-4-yl)thiourea). In terms of biological role, lysophosphatidylserine (LPS) lipase that mediates the hydrolysis of lysophosphatidylserine, a class of signaling lipids that regulates immunological and neurological processes. Represents a major lysophosphatidylserine lipase in the brain, thereby playing a key role in the central nervous system. Also able to hydrolyze oxidized phosphatidylserine; oxidized phosphatidylserine is produced in response to severe inflammatory stress and constitutes a proapoptotic 'eat me' signal. Also has monoacylglycerol (MAG) lipase activity: hydrolyzes 2-arachidonoylglycerol (2-AG), thereby acting as a regulator of endocannabinoid signaling pathways. Has a strong preference for very-long-chain lipid substrates; substrate specificity is likely due to improved catalysis and not improved substrate binding. This chain is Lysophosphatidylserine lipase ABHD12, found in Mus musculus (Mouse).